The sequence spans 509 residues: Cytochrome P450 4A10 (509 aa).

2 consecutive transmembrane segments (helical) span residues 15-35 and 121-141; these read LSGFLQVASVLGLLLLLVKAV and LLAPWIGYGLLLLNGQPWFQH. Glu320 is a binding site for heme. Residue Ser439 is modified to Phosphoserine. Cys456 provides a ligand contact to heme.

This sequence belongs to the cytochrome P450 family. Requires heme as cofactor. Highly expressed in the kidneys of both genders.

Its subcellular location is the endoplasmic reticulum membrane. The protein resides in the microsome membrane. It catalyses the reaction an omega-methyl-long-chain fatty acid + reduced [NADPH--hemoprotein reductase] + O2 = an omega-hydroxy-long-chain fatty acid + oxidized [NADPH--hemoprotein reductase] + H2O + H(+). The enzyme catalyses dodecanoate + reduced [NADPH--hemoprotein reductase] + O2 = 12-hydroxydodecanoate + oxidized [NADPH--hemoprotein reductase] + H2O + H(+). The catalysed reaction is dodecanoate + reduced [NADPH--hemoprotein reductase] + O2 = 11-hydroxydodecanoate + oxidized [NADPH--hemoprotein reductase] + H2O + H(+). It carries out the reaction tetradecanoate + reduced [NADPH--hemoprotein reductase] + O2 = 14-hydroxytetradecanoate + oxidized [NADPH--hemoprotein reductase] + H2O + H(+). It catalyses the reaction hexadecanoate + reduced [NADPH--hemoprotein reductase] + O2 = 16-hydroxyhexadecanoate + oxidized [NADPH--hemoprotein reductase] + H2O + H(+). The enzyme catalyses (9Z)-octadecenoate + reduced [NADPH--hemoprotein reductase] + O2 = 18-hydroxy-(9Z)-octadecenoate + oxidized [NADPH--hemoprotein reductase] + H2O + H(+). The catalysed reaction is (9Z,12Z)-octadecadienoate + reduced [NADPH--hemoprotein reductase] + O2 = 18-hydroxy-(9Z,12Z)-octadecadienoate + oxidized [NADPH--hemoprotein reductase] + H2O + H(+). It carries out the reaction (9Z,12Z)-octadecadienoate + reduced [NADPH--hemoprotein reductase] + O2 = 17-hydroxy-(9Z,12Z)-octadecadienoate + oxidized [NADPH--hemoprotein reductase] + H2O + H(+). It catalyses the reaction (5Z,8Z,11Z,14Z)-eicosatetraenoate + reduced [NADPH--hemoprotein reductase] + O2 = 20-hydroxy-(5Z,8Z,11Z,14Z)-eicosatetraenoate + oxidized [NADPH--hemoprotein reductase] + H2O + H(+). The enzyme catalyses 8,9-epoxy-(5Z,11Z,14Z)-eicosatrienoate + reduced [NADPH--hemoprotein reductase] + O2 = 20-hydroxy-8,9-epoxy-(5Z,11Z,14Z)-eicosatrienoate + oxidized [NADPH--hemoprotein reductase] + H2O + H(+). In terms of biological role, a cytochrome P450 monooxygenase involved in the metabolism of fatty acids. Catalyzes predominantly the oxidation of the terminal carbon (omega-oxidation) of long-chain fatty acids. Acts as a major omega-hydroxylase for dodecanoic (lauric) acid in liver. In kidney, may play an important role in omega-hydroxylation of (5Z,8Z,11Z,14Z)-eicosatetraenoic acid (arachidonate) to 20-hydroxyeicosatetraenoic acid (20-HETE), a signaling molecule acting both as vasoconstrictive and natriuretic with overall effect on arterial blood pressure. Also participates in the formation of anti-inflammatory hydroxyepoxyeicosatrienoic acids (HEETs) in kidney by converting 8,9-epoxyeicosatrienoic acid (EET) to 20,8,9-HEET, an activator of PPARA. Displays substantially lower fatty acid omega-1 hydroxylase activity. Mechanistically, uses molecular oxygen inserting one oxygen atom into a substrate, and reducing the second into a water molecule, with two electrons provided by NADPH via cytochrome P450 reductase (CPR; NADPH-ferrihemoprotein reductase). The protein is Cytochrome P450 4A10 of Mus musculus (Mouse).